Here is a 334-residue protein sequence, read N- to C-terminus: uncharacterized protein (334 aa).

It belongs to the PAPS reductase family.

This is an uncharacterized protein from Escherichia phage 186 (Bacteriophage 186).